A 235-amino-acid chain; its full sequence is Transcription factor hepR (235 aa).

Residues 14 to 45 (QNSPESSRDVLSMASPGLLPIDPSPEHDETNK) form a disordered region. The C2H2-type zinc finger occupies 175–205 (IQCPCLDERGERCSRMFSRLDNMRDHVRRIH).

Its subcellular location is the nucleus. Functionally, transcription factor; part of the gene cluster that mediates the biosynthesis of heptelidic acid (HA), a sesquiterpene lactone that acts as an inhibitor of glyceraldehyde-3-phosphatedehydrogenase (GAPDH) and a growth inhibitor of the salt-tolerant lactic acid bacteria in soy sauce brewing. Both hepR and hepS regulate the transcription of the heptelidic acid cluster, but they are not involved in mutual transcriptional regulation and act with different mechanisms. The protein is Transcription factor hepR of Aspergillus oryzae (strain ATCC 42149 / RIB 40) (Yellow koji mold).